Consider the following 151-residue polypeptide: 6,7-dimethyl-8-ribityllumazine synthase (151 aa).

Residues Phe23, 55–57 (AYE), and 79–81 (AVI) each bind 5-amino-6-(D-ribitylamino)uracil. Position 84-85 (84-85 (AT)) interacts with (2S)-2-hydroxy-3-oxobutyl phosphate. The active-site Proton donor is His87. 5-amino-6-(D-ribitylamino)uracil is bound at residue Phe111. Arg125 is a binding site for (2S)-2-hydroxy-3-oxobutyl phosphate.

Belongs to the DMRL synthase family.

The enzyme catalyses (2S)-2-hydroxy-3-oxobutyl phosphate + 5-amino-6-(D-ribitylamino)uracil = 6,7-dimethyl-8-(1-D-ribityl)lumazine + phosphate + 2 H2O + H(+). It functions in the pathway cofactor biosynthesis; riboflavin biosynthesis; riboflavin from 2-hydroxy-3-oxobutyl phosphate and 5-amino-6-(D-ribitylamino)uracil: step 1/2. In terms of biological role, catalyzes the formation of 6,7-dimethyl-8-ribityllumazine by condensation of 5-amino-6-(D-ribitylamino)uracil with 3,4-dihydroxy-2-butanone 4-phosphate. This is the penultimate step in the biosynthesis of riboflavin. The chain is 6,7-dimethyl-8-ribityllumazine synthase from Leptospira interrogans serogroup Icterohaemorrhagiae serovar Lai (strain 56601).